The chain runs to 96 residues: Co-chaperonin GroES (96 aa).

This sequence belongs to the GroES chaperonin family. As to quaternary structure, heptamer of 7 subunits arranged in a ring. Interacts with the chaperonin GroEL.

The protein resides in the cytoplasm. Its function is as follows. Together with the chaperonin GroEL, plays an essential role in assisting protein folding. The GroEL-GroES system forms a nano-cage that allows encapsulation of the non-native substrate proteins and provides a physical environment optimized to promote and accelerate protein folding. GroES binds to the apical surface of the GroEL ring, thereby capping the opening of the GroEL channel. The protein is Co-chaperonin GroES of Albidiferax ferrireducens (strain ATCC BAA-621 / DSM 15236 / T118) (Rhodoferax ferrireducens).